The chain runs to 716 residues: MSDSGASRLRRQLESGGFEARLYVKQLSQQSDGDRDLQEHRQRVQALAEETAQNLKRNVYQNYRQFIETAREISYLESEMYQLSHLLTEQKSSLESIPLALLPAAAAGASAGEDTAGAGPRERGAVQAGFLPGPAGVPREGSGTGEEGKQRTLTTLLEKVEGCRDLLETPGQYLVYNGDLVEYDADHMAQLQRVHGFLMNDCLLVATWLPQRRGMYRYNALYPLDRLAVVNVKDNPPMKDMFKLLMFPESRIFQAENAKIKREWLEVLEETKRALSDKRRREQEEAAAPRAPPPVTSKGSNPFEDEDDEELATPEAEEEKVDLSMEWIQELPEDLDVCIAQRDFEGAVDLLDKLNHYLEDKPSPPPVKELRAKVDERVRQLTEVLVFELSPDRSLRGGPKATRRAVSQLIRLGQCTKACELFLRNRAAAVHTAIRQLRIEGATLLYIHKLCHVFFTSLLETAREFETDFAGTDSGCYSAFVVWARSAMGMFVDAFSKQVFDSKESLSTAAECVKVAKEHCQQLGEIGLDLTFIIHALLVKDIQGALHSYKEIIIEATKHRNSEEMWRRMNLMTPEALGKLKEEMKSCGVSNFEQYTGDDCWVNLSYTVVAFTKQTMGFLEEALKLYFPELHMVLLESLVEIILVAVQHVDYSLRCEQDPEKKAFIRQNASFLYETVLPVVERRFEEGVGKPAKQLQDLRNASRLLRVNPESTTSVV.

Ser15 is modified (phosphoserine). Residues 129–150 are disordered; the sequence is GFLPGPAGVPREGSGTGEEGKQ. In terms of domain architecture, PH spans 173–273; sequence YLVYNGDLVE…WLEVLEETKR (101 aa). Positions 275-284 are enriched in basic and acidic residues; it reads LSDKRRREQE. Residues 275 to 319 form a disordered region; that stretch reads LSDKRRREQEEAAAPRAPPPVTSKGSNPFEDEDDEELATPEAEEE. Positions 303–319 are enriched in acidic residues; it reads FEDEDDEELATPEAEEE. At Thr313 the chain carries Phosphothreonine.

The protein belongs to the EXO84 family. In terms of assembly, the exocyst complex is composed of EXOC1, EXOC2, EXOC3, EXOC4, EXOC5, EXOC6, EXOC7 and EXOC8. Interacts (via PH domain) with GTP-bound RALA and RALB. Interacts with SH3BP1; required for the localization of both SH3BP1 and the exocyst to the leading edge of migrating cells.

The protein resides in the cytoplasm. It is found in the perinuclear region. The protein localises to the cell projection. It localises to the growth cone. Component of the exocyst complex involved in the docking of exocytic vesicles with fusion sites on the plasma membrane. In Mus musculus (Mouse), this protein is Exocyst complex component 8 (Exoc8).